Here is a 328-residue protein sequence, read N- to C-terminus: Porphobilinogen deaminase (328 aa).

Residue C245 is modified to S-(dipyrrolylmethanemethyl)cysteine.

It belongs to the HMBS family. In terms of assembly, monomer. The cofactor is dipyrromethane.

The catalysed reaction is 4 porphobilinogen + H2O = hydroxymethylbilane + 4 NH4(+). It participates in porphyrin-containing compound metabolism; protoporphyrin-IX biosynthesis; coproporphyrinogen-III from 5-aminolevulinate: step 2/4. It functions in the pathway porphyrin-containing compound metabolism; chlorophyll biosynthesis. Functionally, tetrapolymerization of the monopyrrole PBG into the hydroxymethylbilane pre-uroporphyrinogen in several discrete steps. The sequence is that of Porphobilinogen deaminase from Gloeobacter violaceus (strain ATCC 29082 / PCC 7421).